Reading from the N-terminus, the 313-residue chain is tRNA-cytidine(32) 2-sulfurtransferase (313 aa).

The PP-loop motif signature appears at 50 to 55 (SGGKDS). Residues Cys125, Cys128, and Cys216 each contribute to the [4Fe-4S] cluster site.

Belongs to the TtcA family. As to quaternary structure, homodimer. Requires Mg(2+) as cofactor. [4Fe-4S] cluster serves as cofactor.

The protein resides in the cytoplasm. The catalysed reaction is cytidine(32) in tRNA + S-sulfanyl-L-cysteinyl-[cysteine desulfurase] + AH2 + ATP = 2-thiocytidine(32) in tRNA + L-cysteinyl-[cysteine desulfurase] + A + AMP + diphosphate + H(+). It functions in the pathway tRNA modification. Catalyzes the ATP-dependent 2-thiolation of cytidine in position 32 of tRNA, to form 2-thiocytidine (s(2)C32). The sulfur atoms are provided by the cysteine/cysteine desulfurase (IscS) system. This is tRNA-cytidine(32) 2-sulfurtransferase from Haemophilus influenzae (strain ATCC 51907 / DSM 11121 / KW20 / Rd).